The chain runs to 111 residues: ATP-dependent Clp protease adapter protein ClpS (111 aa).

The protein belongs to the ClpS family. In terms of assembly, binds to the N-terminal domain of the chaperone ClpA.

In terms of biological role, involved in the modulation of the specificity of the ClpAP-mediated ATP-dependent protein degradation. This is ATP-dependent Clp protease adapter protein ClpS from Leptospira interrogans serogroup Icterohaemorrhagiae serovar copenhageni (strain Fiocruz L1-130).